The primary structure comprises 350 residues: Uroporphyrinogen decarboxylase (350 aa).

Residues 28-32 (RQAGR), Asp-78, Tyr-155, Ser-210, and His-325 contribute to the substrate site.

This sequence belongs to the uroporphyrinogen decarboxylase family. As to quaternary structure, homodimer.

It localises to the cytoplasm. It carries out the reaction uroporphyrinogen III + 4 H(+) = coproporphyrinogen III + 4 CO2. It participates in porphyrin-containing compound metabolism; protoporphyrin-IX biosynthesis; coproporphyrinogen-III from 5-aminolevulinate: step 4/4. In terms of biological role, catalyzes the decarboxylation of four acetate groups of uroporphyrinogen-III to yield coproporphyrinogen-III. The chain is Uroporphyrinogen decarboxylase from Trichormus variabilis (strain ATCC 29413 / PCC 7937) (Anabaena variabilis).